The sequence spans 330 residues: Cyclic AMP receptor-like protein E (330 aa).

Residues 1–10 (MLSLSSYVLN) are Extracellular-facing. Residues 11 to 31 (LVGSILCLIGCLFIIGHFFWI) form a helical membrane-spanning segment. Over 32–40 (PLLRTSLSR) the chain is Cytoplasmic. Residues 41-61 (IIIYPTFILLLYDMVSFPSFI) traverse the membrane as a helical segment. Residues 62–85 (SKTADLYIERSTIICNFQEAIIQY) lie on the Extracellular side of the membrane. Residues 86-106 (LILSNFIWSVCISVNLLYLCF) form a helical membrane-spanning segment. At 107 to 116 (SPNKNLKKNE) the chain is on the cytoplasmic side. A helical membrane pass occupies residues 117–137 (LLYHLCSWGIPLIVVVITKIP). Residues 138–156 (NMISDNGNQCRFKSPNYIK) are Extracellular-facing. A helical transmembrane segment spans residues 157–177 (FYLETILFIAFMLFNFIVAFI). The Cytoplasmic segment spans residues 178-213 (TIKHIISGNLRESETTTTSVLFVNEKKITTKKIVWR). A helical membrane pass occupies residues 214 to 234 (LLLYPSILSICYIMTLVLSIY). Over 235-274 (QFSTESYGSGGAYANSINNKRNDKNTESGNSNNNNNSYIE) the chain is Extracellular. Residue Asn269 is glycosylated (N-linked (GlcNAc...) asparagine). Residues 275-295 (ILLYISKAIFLLQGFFNALVY) form a helical membrane-spanning segment. The Cytoplasmic portion of the chain corresponds to 296–330 (LRSSKLRDRYKKITIFRKIFWRDEADYQSINDGFN).

Belongs to the G-protein coupled receptor 5 family.

It is found in the membrane. In terms of biological role, receptor for cAMP. This chain is Cyclic AMP receptor-like protein E (crlE), found in Dictyostelium discoideum (Social amoeba).